We begin with the raw amino-acid sequence, 115 residues long: Ribonuclease P protein component (115 aa).

Belongs to the RnpA family. In terms of assembly, consists of a catalytic RNA component (M1 or rnpB) and a protein subunit.

It catalyses the reaction Endonucleolytic cleavage of RNA, removing 5'-extranucleotides from tRNA precursor.. Its function is as follows. RNaseP catalyzes the removal of the 5'-leader sequence from pre-tRNA to produce the mature 5'-terminus. It can also cleave other RNA substrates such as 4.5S RNA. The protein component plays an auxiliary but essential role in vivo by binding to the 5'-leader sequence and broadening the substrate specificity of the ribozyme. The sequence is that of Ribonuclease P protein component from Bacillus cereus (strain 03BB102).